Here is a 450-residue protein sequence, read N- to C-terminus: MFTLTKALEKALLQHFIYMKVNIAYAINKSFPFFETLRDNSFITERMYKESLEACQNLVPLSKVVHNILTSLEQTFQPSVLLTLFSQVNLREYPSLVAIFRSFRNVGYTYEEKNRPPPTLLEDLANPAEGCSLQTLLPPPRPQLSLPSHLSSAPRVCDPRATAQPITEILDEQPSPSPQAVPLPGCIQEGKTIPVSSRDHQRKDKEDSREMPHSPSGPESVVKDDSPAANDLEMAQEVLCTPANKKARRKKRLNWSNSKRGRQKKKPRQDEMMGVASPGHGVQEKIKAVVSRRTLWKDDSSTNVKEVTKILRARMRCAQTSNSQEISKEASKTSGRKRHGKRTSTAGKTTQVPGKTKNDAVDFLSPTFPVTCGKANGTLFQEKLKQGVSKKCIQNEAGDWLTVKEFLNEGRRATSKDWKKAIRCNGETLRQLEQKGLLFCTKSKPQKKGA.

The HSR domain occupies 1 to 108 (MFTLTKALEK…IFRSFRNVGY (108 aa)). 2 disordered regions span residues 131–156 (CSLQ…APRV) and 170–225 (LDEQ…VKDD). The span at 143-154 (QLSLPSHLSSAP) shows a compositional bias: low complexity. Phosphoserine occurs at positions 175 and 177. Over residues 197–212 (SRDHQRKDKEDSREMP) the composition is skewed to basic and acidic residues. The residue at position 226 (Ser-226) is a Phosphoserine. 2 disordered regions span residues 238-283 (VLCT…HGVQ) and 318-360 (AQTS…KNDA). Basic residues predominate over residues 245–267 (KKARRKKRLNWSNSKRGRQKKKP). Positions 251-266 (KRLNWSNSKRGRQKKK) match the Nuclear localization signal motif. The span at 343 to 353 (TSTAGKTTQVP) shows a compositional bias: polar residues. The region spanning 358-439 (NDAVDFLSPT…RQLEQKGLLF (82 aa)) is the SAND domain.

The protein localises to the nucleus. This is Interferon-induced protein 75 (Ifi75) from Mus caroli (Ryukyu mouse).